Consider the following 301-residue polypeptide: Formylmethanofuran--tetrahydromethanopterin formyltransferase-like protein (301 aa).

Belongs to the FTR family.

The polypeptide is Formylmethanofuran--tetrahydromethanopterin formyltransferase-like protein (Archaeoglobus fulgidus (strain ATCC 49558 / DSM 4304 / JCM 9628 / NBRC 100126 / VC-16)).